The following is a 289-amino-acid chain: uncharacterized protein (289 aa).

Residues 1 to 20 (MNPMDRQTEGQEPQHQDRQP) are compositionally biased toward basic and acidic residues. Residues 1–39 (MNPMDRQTEGQEPQHQDRQPGIESKMNPLPLSEDEDYRG) form a disordered region. 49 to 73 (IITGGDSGIGRAAAIAFAKEGADIS) is a binding site for NADP(+). Ser181 lines the substrate pocket. Catalysis depends on Tyr194, which acts as the Proton acceptor.

It belongs to the short-chain dehydrogenases/reductases (SDR) family.

This is an uncharacterized protein from Bacillus subtilis (strain 168).